The primary structure comprises 455 residues: Fez family zinc finger protein 2 (455 aa).

The tract at residues Met-1–Pro-22 is disordered. An Engrailed homology 1 repressor motif is present at residues Thr-27 to Pro-42. C2H2-type zinc fingers lie at residues Phe-272–His-294, Phe-300–His-322, His-328–His-350, Phe-356–His-378, Tyr-384–His-406, and Phe-412–His-435.

Belongs to the krueppel C2H2-type zinc-finger protein family. As to expression, highly expressed in neocortical layer V, moderately expressed in layer VI. Expressed in subcortically projecting neurons.

The protein resides in the nucleus. Its function is as follows. Transcription repressor. Required for the specification of corticospinal motor neurons and other subcerebral projection neurons. May play a role in layer and neuronal subtype-specific patterning of subcortical projections and axonal fasciculation. Controls the development of dendritic arborization and spines of large layer V pyramidal neurons. Plays a role in rostro-caudal patterning of the diencephalon and in prethalamic formation. The sequence is that of Fez family zinc finger protein 2 (Fezf2) from Mus musculus (Mouse).